Here is a 342-residue protein sequence, read N- to C-terminus: Serpentine receptor class gamma-69 (342 aa).

A run of 7 helical transmembrane segments spans residues 11 to 31, 51 to 71, 106 to 126, 140 to 160, 191 to 211, 222 to 242, and 269 to 289; these read MAGL…SVVV, SLLY…HFLI, PIAI…IVAA, LFVL…IPCK, IAAV…LIAL, AEIS…IYAF, and FAID…STTV.

This sequence belongs to the nematode receptor-like protein srg family.

It is found in the membrane. This chain is Serpentine receptor class gamma-69 (srg-69), found in Caenorhabditis elegans.